A 179-amino-acid chain; its full sequence is tRNA-splicing endonuclease (179 aa).

Catalysis depends on residues Tyr115, His123, and Lys154.

It belongs to the tRNA-intron endonuclease family. Archaeal short subfamily. In terms of assembly, homotetramer; although the tetramer contains four active sites, only two participate in the cleavage. Therefore, it should be considered as a dimer of dimers.

The enzyme catalyses pretRNA = a 3'-half-tRNA molecule with a 5'-OH end + a 5'-half-tRNA molecule with a 2',3'-cyclic phosphate end + an intron with a 2',3'-cyclic phosphate and a 5'-hydroxyl terminus.. Endonuclease that removes tRNA introns. Cleaves pre-tRNA at the 5'- and 3'-splice sites to release the intron. The products are an intron and two tRNA half-molecules bearing 2',3' cyclic phosphate and 5'-OH termini. Recognizes a pseudosymmetric substrate in which 2 bulged loops of 3 bases are separated by a stem of 4 bp. The protein is tRNA-splicing endonuclease of Methanopyrus kandleri (strain AV19 / DSM 6324 / JCM 9639 / NBRC 100938).